A 383-amino-acid chain; its full sequence is Phospho-N-acetylmuramoyl-pentapeptide-transferase (383 aa).

The next 9 membrane-spanning stretches (helical) occupy residues 26 to 46, 73 to 93, 98 to 118, 131 to 151, 182 to 202, 221 to 241, 258 to 278, 283 to 305, and 360 to 380; these read TAGA…GVIE, TMGG…WAEL, IILL…DDFL, IYKI…LYYF, IFLP…IPFA, GLAI…SYVS, AGEV…FLWF, AQVF…IALF, and QVVF…IATL.

Belongs to the glycosyltransferase 4 family. MraY subfamily. Mg(2+) serves as cofactor.

It localises to the cell inner membrane. It carries out the reaction UDP-N-acetyl-alpha-D-muramoyl-L-alanyl-gamma-D-glutamyl-meso-2,6-diaminopimeloyl-D-alanyl-D-alanine + di-trans,octa-cis-undecaprenyl phosphate = di-trans,octa-cis-undecaprenyl diphospho-N-acetyl-alpha-D-muramoyl-L-alanyl-D-glutamyl-meso-2,6-diaminopimeloyl-D-alanyl-D-alanine + UMP. The protein operates within cell wall biogenesis; peptidoglycan biosynthesis. In terms of biological role, catalyzes the initial step of the lipid cycle reactions in the biosynthesis of the cell wall peptidoglycan: transfers peptidoglycan precursor phospho-MurNAc-pentapeptide from UDP-MurNAc-pentapeptide onto the lipid carrier undecaprenyl phosphate, yielding undecaprenyl-pyrophosphoryl-MurNAc-pentapeptide, known as lipid I. In Brachyspira hyodysenteriae (strain ATCC 49526 / WA1), this protein is Phospho-N-acetylmuramoyl-pentapeptide-transferase.